The chain runs to 250 residues: Cell division protein ZapD (250 aa).

Belongs to the ZapD family. As to quaternary structure, interacts with FtsZ.

It localises to the cytoplasm. Cell division factor that enhances FtsZ-ring assembly. Directly interacts with FtsZ and promotes bundling of FtsZ protofilaments, with a reduction in FtsZ GTPase activity. This chain is Cell division protein ZapD, found in Yersinia pseudotuberculosis serotype O:1b (strain IP 31758).